The following is a 556-amino-acid chain: U-box domain-containing protein 38 (556 aa).

Positions 1–34 (MGKNGRLRWNPFSHRSSSSTSSSSRQQQQEQQPP) are disordered. Residues 13 to 32 (SHRSSSSTSSSSRQQQQEQQ) show a composition bias toward low complexity. Positions 32–108 (QPPVEFLCPI…DTWCDTVGVS (77 aa)) constitute a U-box domain. ARM repeat units follow at residues 256–295 (DEAR…NLSL), 297–336 (KKNK…SLSL), 338–378 (DDNK…HLTL), 380–417 (QTNR…NLAC), and 418–468 (CSEG…ALSH).

In terms of assembly, binds to SD16, SD17, SD18 and SD129.

It carries out the reaction S-ubiquitinyl-[E2 ubiquitin-conjugating enzyme]-L-cysteine + [acceptor protein]-L-lysine = [E2 ubiquitin-conjugating enzyme]-L-cysteine + N(6)-ubiquitinyl-[acceptor protein]-L-lysine.. It functions in the pathway protein modification; protein ubiquitination. Its function is as follows. Functions as an E3 ubiquitin ligase. This chain is U-box domain-containing protein 38 (PUB38), found in Arabidopsis thaliana (Mouse-ear cress).